Consider the following 40-residue polypeptide: Cytochrome b6-f complex subunit 5 (40 aa).

The chain crosses the membrane as a helical span at residues 5-25 (ILLGMVLGFVPVTIAGLLVAA).

It belongs to the PetG family. The 4 large subunits of the cytochrome b6-f complex are cytochrome b6, subunit IV (17 kDa polypeptide, PetD), cytochrome f and the Rieske protein, while the 4 small subunits are PetG, PetL, PetM and PetN. The complex functions as a dimer.

It localises to the cell inner membrane. In terms of biological role, component of the cytochrome b6-f complex, which mediates electron transfer between photosystem II (PSII) and photosystem I (PSI), cyclic electron flow around PSI, and state transitions. PetG is required for either the stability or assembly of the cytochrome b6-f complex. The protein is Cytochrome b6-f complex subunit 5 of Gloeobacter violaceus (strain ATCC 29082 / PCC 7421).